The chain runs to 137 residues: Large ribosomal subunit protein uL16 (137 aa).

This sequence belongs to the universal ribosomal protein uL16 family. As to quaternary structure, part of the 50S ribosomal subunit.

In terms of biological role, binds 23S rRNA and is also seen to make contacts with the A and possibly P site tRNAs. This chain is Large ribosomal subunit protein uL16, found in Psychrobacter sp. (strain PRwf-1).